A 404-amino-acid polypeptide reads, in one-letter code: Caspase-1 (404 aa).

Residues 1–91 enclose the CARD domain; that stretch reads MADKVLKEKR…HLAGVLELST (91 aa). Positions 1 to 119 are excised as a propeptide; it reads MADKVLKEKR…PFPAPQTVQD (119 aa). The disordered stretch occupies residues 111 to 132; sequence FPAPQTVQDNPVKPASSEPRGS. Catalysis depends on residues histidine 237 and cysteine 285. The propeptide occupies 298–316; that stretch reads SVGPSGNSSLLAAEDFEYD. Serine 302 carries the post-translational modification Phosphoserine.

The protein belongs to the peptidase C14A family. As to quaternary structure, heterotetramer that consists of two anti-parallel arranged heterodimers, each one formed by a 20 kDa (Caspase-1 subunit p20) and a 10 kDa (Caspase-1 subunit p10) subunit. May be a component of the inflammasome, a protein complex which also includes PYCARD, CARD8 and NLRP2 and whose function would be the activation of pro-inflammatory caspases. Component of the AIM2 PANoptosome complex, a multiprotein complex that drives inflammatory cell death (PANoptosis). Both the p10 and p20 subunits interact with MEFV. Interacts with CARD17P/INCA and CARD18. Interacts with SERPINB1; this interaction regulates CASP1 activity. Heterotetramer that consists of two anti-parallel arranged heterodimers, each one formed by a 20 kDa (Caspase-1 subunit p20) and a 10 kDa (Caspase-1 subunit p10) subunit. In terms of processing, the two subunits are derived from the precursor sequence by an autocatalytic mechanism. Post-translationally, ubiquitinated via 'Lys-11'-linked polyubiquitination. Deubiquitinated by USP8.

The protein resides in the cytoplasm. Its subcellular location is the cell membrane. It catalyses the reaction Strict requirement for an Asp residue at position P1 and has a preferred cleavage sequence of Tyr-Val-Ala-Asp-|-.. In terms of biological role, thiol protease involved in a variety of inflammatory processes by proteolytically cleaving other proteins, such as the precursors of the inflammatory cytokines interleukin-1 beta (IL1B) and interleukin 18 (IL18) as well as the pyroptosis inducer Gasdermin-D (GSDMD), into active mature peptides. Plays a key role in cell immunity as an inflammatory response initiator: once activated through formation of an inflammasome complex, it initiates a pro-inflammatory response through the cleavage of the two inflammatory cytokines IL1B and IL18, releasing the mature cytokines which are involved in a variety of inflammatory processes. Cleaves a tetrapeptide after an Asp residue at position P1. Also initiates pyroptosis, a programmed lytic cell death pathway, through cleavage of GSDMD. In contrast to cleavage of interleukin IL1B, recognition and cleavage of GSDMD is not strictly dependent on the consensus cleavage site but depends on an exosite interface on CASP1 that recognizes and binds the Gasdermin-D, C-terminal (GSDMD-CT) part. Cleaves and activates CASP7 in response to bacterial infection, promoting plasma membrane repair. Upon inflammasome activation, during DNA virus infection but not RNA virus challenge, controls antiviral immunity through the cleavage of CGAS, rendering it inactive. In apoptotic cells, cleaves SPHK2 which is released from cells and remains enzymatically active extracellularly. The sequence is that of Caspase-1 (CASP1) from Sus scrofa (Pig).